The primary structure comprises 328 residues: Glycerophosphodiester phosphodiesterase GDPD4 (328 aa).

The chain crosses the membrane as a helical span at residues 35-55; sequence TILFAVIFLAIFPPLYFHFKL. Residues 73 to 312 enclose the GP-PDE domain; the sequence is PLVCAHGGDS…SDPSMFQGLM (240 aa).

The protein belongs to the glycerophosphoryl diester phosphodiesterase family. Expressed in rosette and cauline leaves.

Its subcellular location is the membrane. It catalyses the reaction a sn-glycero-3-phosphodiester + H2O = an alcohol + sn-glycerol 3-phosphate + H(+). In Arabidopsis thaliana (Mouse-ear cress), this protein is Glycerophosphodiester phosphodiesterase GDPD4.